The primary structure comprises 364 residues: MVAVTQTPLDNISVTPDSNDWSAILQQLLKRQSLTVAQATDLMQGWLTDTIPPVLSGAILAAIQAKGVSSEELVGMARVLQSQSSYSPPHSPFPTPLIDTCGTGGDGASTFNISTAVAFVAAAAGVKVAKHGNRSASSKTGSADVLEALGINLNANADKVQAAVSEVGITFLFAPGWHPALKTVATLRKTLKVRTIFNLLGPLVNPLRPTGQIIGVNDPLLIEEIALALSHLGCRKAIALHGRERLDEAGLADVTDLAILQDGKVSCLALNPQELGLNHAPTEVLRGGDVAENAEILKAILQGKGTQAQQDVVALNTALALQVGEAITTTDIVEGCVKGIAIAREVLQSGAAWTKLEQLAEFLR.

Residues Gly-102, 105 to 106, Thr-110, 112 to 115, 130 to 138, and Ser-142 contribute to the 5-phospho-alpha-D-ribose 1-diphosphate site; these read GD, NIST, and KHGNRSASS. Gly-102 is a binding site for anthranilate. Ser-114 serves as a coordination point for Mg(2+). Asn-133 serves as a coordination point for anthranilate. Residue Arg-188 participates in anthranilate binding. Mg(2+)-binding residues include Asp-247 and Glu-248.

This sequence belongs to the anthranilate phosphoribosyltransferase family. As to quaternary structure, homodimer. Requires Mg(2+) as cofactor.

It catalyses the reaction N-(5-phospho-beta-D-ribosyl)anthranilate + diphosphate = 5-phospho-alpha-D-ribose 1-diphosphate + anthranilate. It functions in the pathway amino-acid biosynthesis; L-tryptophan biosynthesis; L-tryptophan from chorismate: step 2/5. Functionally, catalyzes the transfer of the phosphoribosyl group of 5-phosphorylribose-1-pyrophosphate (PRPP) to anthranilate to yield N-(5'-phosphoribosyl)-anthranilate (PRA). This is Anthranilate phosphoribosyltransferase 1 from Nostoc sp. (strain PCC 7120 / SAG 25.82 / UTEX 2576).